A 536-amino-acid polypeptide reads, in one-letter code: Phosphoenolpyruvate carboxykinase (ATP) (536 aa).

Residues R61, Y195, and K201 each contribute to the substrate site. ATP contacts are provided by residues K201, H220, and 236-244; that span reads GLSGTGKTT. Mn(2+) is bound by residues K201 and H220. D257 contributes to the Mn(2+) binding site. ATP-binding residues include E285, R322, and T447. R322 is a binding site for substrate.

Belongs to the phosphoenolpyruvate carboxykinase (ATP) family. Requires Mn(2+) as cofactor.

The protein resides in the cytoplasm. The enzyme catalyses oxaloacetate + ATP = phosphoenolpyruvate + ADP + CO2. Its pathway is carbohydrate biosynthesis; gluconeogenesis. Functionally, involved in the gluconeogenesis. Catalyzes the conversion of oxaloacetate (OAA) to phosphoenolpyruvate (PEP) through direct phosphoryl transfer between the nucleoside triphosphate and OAA. The protein is Phosphoenolpyruvate carboxykinase (ATP) of Brucella suis biovar 1 (strain 1330).